Here is a 131-residue protein sequence, read N- to C-terminus: MASPAKKVVRKKRERKNVTNGVAHIHATFNNTMITIADTAGNVLAWSTSGAKGFKGSRKSTPFAAQVAAEDCAKKAQEHGLRNVEVYVKGPGSGRESALRALQAAGFNISFIKDVTPIPHNGCRPPKKRRV.

It belongs to the universal ribosomal protein uS11 family. In terms of assembly, part of the 30S ribosomal subunit. Interacts with proteins S7 and S18. Binds to IF-3.

In terms of biological role, located on the platform of the 30S subunit, it bridges several disparate RNA helices of the 16S rRNA. Forms part of the Shine-Dalgarno cleft in the 70S ribosome. In Pelobacter propionicus (strain DSM 2379 / NBRC 103807 / OttBd1), this protein is Small ribosomal subunit protein uS11.